The primary structure comprises 134 residues: Profilin-2 (134 aa).

A disulfide bond links Cys13 and Cys118. The Involved in PIP2 interaction motif lies at 84–100 (AVIRGKKGSGGITIKKT). Residue Thr114 is modified to Phosphothreonine.

The protein belongs to the profilin family. In terms of assembly, occurs in many kinds of cells as a complex with monomeric actin in a 1:1 ratio. Phosphorylated by MAP kinases.

The protein resides in the cytoplasm. It is found in the cytoskeleton. Its function is as follows. Binds to actin and affects the structure of the cytoskeleton. At high concentrations, profilin prevents the polymerization of actin, whereas it enhances it at low concentrations. In Olea europaea (Common olive), this protein is Profilin-2.